The chain runs to 436 residues: Serine hydroxymethyltransferase (436 aa).

(6S)-5,6,7,8-tetrahydrofolate contacts are provided by residues L133 and 137 to 139 (GHI). K242 bears the N6-(pyridoxal phosphate)lysine mark.

The protein belongs to the SHMT family. As to quaternary structure, homodimer. It depends on pyridoxal 5'-phosphate as a cofactor.

The protein resides in the cytoplasm. It carries out the reaction (6R)-5,10-methylene-5,6,7,8-tetrahydrofolate + glycine + H2O = (6S)-5,6,7,8-tetrahydrofolate + L-serine. The protein operates within one-carbon metabolism; tetrahydrofolate interconversion. It participates in amino-acid biosynthesis; glycine biosynthesis; glycine from L-serine: step 1/1. In terms of biological role, catalyzes the reversible interconversion of serine and glycine with tetrahydrofolate (THF) serving as the one-carbon carrier. This reaction serves as the major source of one-carbon groups required for the biosynthesis of purines, thymidylate, methionine, and other important biomolecules. Also exhibits THF-independent aldolase activity toward beta-hydroxyamino acids, producing glycine and aldehydes, via a retro-aldol mechanism. This Pelagibacter ubique (strain HTCC1062) protein is Serine hydroxymethyltransferase.